Consider the following 491-residue polypeptide: UDP-N-acetylmuramate--L-alanine ligase (491 aa).

126-132 (GTHGKTT) lines the ATP pocket.

This sequence belongs to the MurCDEF family.

It is found in the cytoplasm. The enzyme catalyses UDP-N-acetyl-alpha-D-muramate + L-alanine + ATP = UDP-N-acetyl-alpha-D-muramoyl-L-alanine + ADP + phosphate + H(+). It participates in cell wall biogenesis; peptidoglycan biosynthesis. Functionally, cell wall formation. The polypeptide is UDP-N-acetylmuramate--L-alanine ligase (Shigella sonnei (strain Ss046)).